The chain runs to 223 residues: MEVKDILKTVDHTLLATTATWPEIQTILDDAMAYETASACIPASYVKKAAEYVSGKLAICTVIGFPNGYSTTAAKVFECQDAIQNGADEIDMVINLTDVKNGDFDTVEEEIRQIKAACQDHILKVIVETCQLTKEELIELCGVVTRSGADFIKTSTGFSTAGATFEDVEVMAKYVGEGVKIKAAGGISSLEDAKTFIALGASRLGTSRIIKIVKNEATKTDSY.

Asp91 serves as the catalytic Proton donor/acceptor. Lys153 functions as the Schiff-base intermediate with acetaldehyde in the catalytic mechanism. Lys182 acts as the Proton donor/acceptor in catalysis.

The protein belongs to the DeoC/FbaB aldolase family. DeoC type 1 subfamily.

It is found in the cytoplasm. It catalyses the reaction 2-deoxy-D-ribose 5-phosphate = D-glyceraldehyde 3-phosphate + acetaldehyde. Its pathway is carbohydrate degradation; 2-deoxy-D-ribose 1-phosphate degradation; D-glyceraldehyde 3-phosphate and acetaldehyde from 2-deoxy-alpha-D-ribose 1-phosphate: step 2/2. Its function is as follows. Catalyzes a reversible aldol reaction between acetaldehyde and D-glyceraldehyde 3-phosphate to generate 2-deoxy-D-ribose 5-phosphate. The chain is Deoxyribose-phosphate aldolase from Streptococcus pyogenes serotype M28 (strain MGAS6180).